A 249-amino-acid polypeptide reads, in one-letter code: 2,3-bisphosphoglycerate-dependent phosphoglycerate mutase (249 aa).

Substrate-binding positions include 7 to 14, 20 to 21, arginine 59, 86 to 89, lysine 97, 113 to 114, and 182 to 183; these read RHGESEWN, TG, ERHY, RR, and GN. Histidine 8 serves as the catalytic Tele-phosphohistidine intermediate. Residue glutamate 86 is the Proton donor/acceptor of the active site.

The protein belongs to the phosphoglycerate mutase family. BPG-dependent PGAM subfamily.

The enzyme catalyses (2R)-2-phosphoglycerate = (2R)-3-phosphoglycerate. The protein operates within carbohydrate degradation; glycolysis; pyruvate from D-glyceraldehyde 3-phosphate: step 3/5. Functionally, catalyzes the interconversion of 2-phosphoglycerate and 3-phosphoglycerate. The protein is 2,3-bisphosphoglycerate-dependent phosphoglycerate mutase of Lachnoclostridium phytofermentans (strain ATCC 700394 / DSM 18823 / ISDg) (Clostridium phytofermentans).